Consider the following 840-residue polypeptide: Protein translocase subunit SecA (840 aa).

Residues glutamine 87, 105–109 (GEGKT), and aspartate 494 contribute to the ATP site. Residues 791–840 (LRKEQEDQPMFFGPAEGAGQKPQTRKDRKVGRNDPCPCGSGKKYKKCCGK) are disordered. Residues cysteine 826, cysteine 828, cysteine 837, and cysteine 838 each coordinate Zn(2+).

This sequence belongs to the SecA family. In terms of assembly, monomer and homodimer. Part of the essential Sec protein translocation apparatus which comprises SecA, SecYEG and auxiliary proteins SecDF-YajC and YidC. Zn(2+) serves as cofactor.

The protein resides in the cell inner membrane. It is found in the cytoplasm. It carries out the reaction ATP + H2O + cellular proteinSide 1 = ADP + phosphate + cellular proteinSide 2.. Part of the Sec protein translocase complex. Interacts with the SecYEG preprotein conducting channel. Has a central role in coupling the hydrolysis of ATP to the transfer of proteins into and across the cell membrane, serving as an ATP-driven molecular motor driving the stepwise translocation of polypeptide chains across the membrane. The sequence is that of Protein translocase subunit SecA from Syntrophobacter fumaroxidans (strain DSM 10017 / MPOB).